Consider the following 44-residue polypeptide: Large ribosomal subunit protein bL34 (44 aa).

Composition is skewed to basic residues over residues Met-1–Lys-14 and Leu-31–Val-44. Residues Met-1–Val-44 form a disordered region.

The protein belongs to the bacterial ribosomal protein bL34 family.

The protein is Large ribosomal subunit protein bL34 of Gloeobacter violaceus (strain ATCC 29082 / PCC 7421).